The chain runs to 4639 residues: Dynein heavy chain, cytoplasmic (4639 aa).

Residues 1 to 1856 (MGDSLENPDT…TIHMANARFF (1856 aa)) form a stem region. 3 coiled-coil regions span residues 530-565 (LDIT…LRDQ), 774-794 (SLIE…DRAS), and 1264-1368 (DDAL…ARLR). 4 AAA regions span residues 1857–2084 (YGFE…VLIS), 2166–2437 (EEIR…FTRL), 2541–2790 (EVET…WVRG), and 2884–3153 (VFYE…GGRT). ATP contacts are provided by residues 1895 to 1902 (GPAGTGKT), 2210 to 2217 (GPSGSGKS), 2580 to 2587 (GPPGSGKT), and 2922 to 2929 (GVSGAGKT). Coiled-coil stretches lie at residues 3189 to 3261 (GLNK…EKRK), 3382 to 3478 (AIAQ…WEST), and 3723 to 3782 (EFRL…EIET). A stalk region spans residues 3189–3478 (GLNKIAETVE…NIERERWEST (290 aa)). AAA stretches follow at residues 3539 to 3768 (LSNP…DINQ) and 3989 to 4205 (AHNV…TLDT).

It belongs to the dynein heavy chain family. As to quaternary structure, consists of at least two heavy chains and a number of intermediate and light chains.

It localises to the cytoplasm. Its subcellular location is the cytoskeleton. Cytoplasmic dynein acts as a motor for the intracellular retrograde motility of vesicles and organelles along microtubules. Dynein has ATPase activity; the force-producing power stroke is thought to occur on release of ADP. The sequence is that of Dynein heavy chain, cytoplasmic (Dhc64C) from Drosophila melanogaster (Fruit fly).